We begin with the raw amino-acid sequence, 395 residues long: Protein PIN-LIKES 7 (395 aa).

Topologically, residues 1-8 (MGFLELLE) are lumenal. A helical transmembrane segment spans residues 9–29 (VASMPIVQVLLISVLGAFLAT). Over 30-45 (DYCSLLSADTRRSVNK) the chain is Cytoplasmic. Residues 46–66 (LVFVVFTPCIMFANLAETVTL) form a helical membrane-spanning segment. Topologically, residues 67–73 (QDIISWW) are lumenal. The helical transmembrane segment at 74–94 (FMPINVGITFLVGGILGWLVV) threads the bilayer. At 95-106 (KLLNPKPQLHGL) the chain is on the cytoplasmic side. The helical transmembrane segment at 107-127 (IIATCASGNMGNLMLILVPAI) threads the bilayer. The Lumenal segment spans residues 128–142 (CDEEGSPFGNRSVCR). A helical membrane pass occupies residues 143–163 (SIGLSYASFSMALGGFYIWTY). Residues 164 to 232 (SYQLVRSSAT…KDLLHQILEE (69 aa)) lie on the Cytoplasmic side of the membrane. A helical membrane pass occupies residues 233–253 (LFAPPTIGAILGFVFGATNWL). The Lumenal portion of the chain corresponds to 254–272 (RNLIIGENAPLRVIQDSVK). Residues 273 to 293 (LLGEGTIPCITLILGGNLIQG) form a helical membrane-spanning segment. The Cytoplasmic portion of the chain corresponds to 294–302 (LRSSAVKKS). A helical transmembrane segment spans residues 303 to 323 (VIVGVIIVRYILLPVVGVGVV). Residues 324 to 340 (QLAGNLGYLPPDPLFRY) lie on the Lumenal side of the membrane. Residues 341–361 (VLMLQFALPPAMNISTMAQLF) form a helical membrane-spanning segment. Topologically, residues 362 to 369 (DVAQDECS) are cytoplasmic. Residues 370-390 (VIFLWTYLVASLALTVWSTIF) form a helical membrane-spanning segment. The Lumenal portion of the chain corresponds to 391–395 (LSILS).

Belongs to the auxin efflux carrier (TC 2.A.69.2) family. In terms of tissue distribution, expressed in seedlings, rosette and cauline leaves, stems and flowers.

Its subcellular location is the endoplasmic reticulum membrane. Functionally, involved in cellular auxin homeostasis by regulating auxin metabolism. Regulates intracellular auxin accumulation at the endoplasmic reticulum and thus auxin availability for nuclear auxin signaling. This chain is Protein PIN-LIKES 7, found in Arabidopsis thaliana (Mouse-ear cress).